The sequence spans 124 residues: MNLEYVQVVQKFNQVLLELTKKVCTVVGGSKPTYWYHHIRRVCSECPSMPMSMIGPYLNVYKAQILTRDKNFFMNFDPAHNEYTFIIQKLKEAARNMPEDELEQYWVKLLFLLKSYIKCKPFIN.

The protein belongs to the asfivirus H124R family.

The protein resides in the virion. This is an uncharacterized protein from Ornithodoros (relapsing fever ticks).